Here is a 465-residue protein sequence, read N- to C-terminus: Mothers against decapentaplegic homolog 5 (465 aa).

The region spanning 13–137 is the MH1 domain; that stretch reads PAVKRLLGWK…YKRVESPVLP (125 aa). Zn(2+) is bound by residues C65, C110, C122, and H127. A disordered region spans residues 163–242; it reads NEPHMPHNAT…MGQDNSQSMD (80 aa). Polar residues predominate over residues 173-183; sequence FPDSFQQPNST. Residues 198–214 show a composition bias toward low complexity; it reads ASSTYPSSPASSGPSSP. Residues 271-465 form the MH2 domain; that stretch reads WCSIVYYELN…SPLNPISSVS (195 aa).

This sequence belongs to the dwarfin/SMAD family. As to quaternary structure, may form trimers with the co-SMAD SMAD4.

It is found in the cytoplasm. The protein resides in the nucleus. Transcriptional modulator activated by BMP (bone morphogenetic proteins) type 1 receptor kinase. SMAD5 is a receptor-regulated SMAD (R-SMAD). This chain is Mothers against decapentaplegic homolog 5 (SMAD5), found in Gallus gallus (Chicken).